Reading from the N-terminus, the 118-residue chain is Large ribosomal subunit protein uL18 (118 aa).

A disordered region spans residues 1-24 (MITKPDKNKIRQKRHRRVRGKLSG). Basic residues predominate over residues 10–20 (IRQKRHRRVRG).

This sequence belongs to the universal ribosomal protein uL18 family. As to quaternary structure, part of the 50S ribosomal subunit; part of the 5S rRNA/L5/L18/L25 subcomplex. Contacts the 5S and 23S rRNAs.

Its function is as follows. This is one of the proteins that bind and probably mediate the attachment of the 5S RNA into the large ribosomal subunit, where it forms part of the central protuberance. This chain is Large ribosomal subunit protein uL18, found in Streptococcus sanguinis (strain SK36).